The chain runs to 952 residues: Protocadherin-20 (952 aa).

A signal peptide spans Met1–Ala60. Over Ser61 to Leu891 the chain is Extracellular. 6 consecutive Cadherin domains span residues Arg64 to Phe210, Pro211 to Phe321, Ile322 to Phe536, Leu537 to Phe640, Ile641 to Val743, and Gln747 to Ile864. N-linked (GlcNAc...) asparagine glycosylation occurs at Asn135. Asn327 and Asn333 each carry an N-linked (GlcNAc...) asparagine glycan. Asn681, Asn749, Asn804, Asn845, and Asn850 each carry an N-linked (GlcNAc...) asparagine glycan. Residues Val892–Ile912 form a helical membrane-spanning segment. The Cytoplasmic segment spans residues Cys913–Ile952.

The protein resides in the cell membrane. Functionally, potential calcium-dependent cell-adhesion protein. The protein is Protocadherin-20 (Pcdh20) of Mus musculus (Mouse).